A 264-amino-acid chain; its full sequence is JmjC domain-containing protein 8 (264 aa).

Positions 1-23 are cleaved as a signal peptide; it reads MAPASRLLALWALAAVALPGSGA. N-linked (GlcNAc...) asparagine glycans are attached at residues asparagine 130, asparagine 140, and asparagine 209. Positions 131 to 264 constitute a JmjC domain; it reads DTLYFFGDNN…TSVFISTFLG (134 aa).

Oligomer. Dimer. Interacts with PKM; regulates angiogenesis and metabolism. Post-translationally, N-glycosylated.

The protein resides in the endoplasmic reticulum lumen. Its subcellular location is the cytoplasm. Functionally, functions as a positive regulator of TNF-induced NF-kappa-B signaling. Regulates angiogenesis and cellular metabolism through interaction with PKM. This Homo sapiens (Human) protein is JmjC domain-containing protein 8.